The following is a 128-amino-acid chain: Flagellar basal body rod protein FlgB (128 aa).

The protein belongs to the flagella basal body rod proteins family. In terms of assembly, the basal body constitutes a major portion of the flagellar organelle and consists of a number of rings mounted on a central rod. In Gram-negative bacteria, at least four rings, L, P, S and M are present, whereas Gram-positive bacteria lack the L and P rings. The rod consists of about 26 subunits of FlgG in the distal portion, and FlgB, FlgC and FlgF build up the proximal portion of the rod with about 6 subunits each. Rod assembly occurs by export via the flagellum-specific pathway of its constituent proteins and by their incorporation into the rod structure in the probable order of FlgB, FlgC, FlgF and FlgG. Another protein, FliE, also assembles onto the stable rod structure.

Its subcellular location is the bacterial flagellum basal body. Functionally, structural component of flagellum, the bacterial motility apparatus. Part of the rod structure of flagellar basal body. This Cereibacter sphaeroides (strain ATCC 17023 / DSM 158 / JCM 6121 / CCUG 31486 / LMG 2827 / NBRC 12203 / NCIMB 8253 / ATH 2.4.1.) (Rhodobacter sphaeroides) protein is Flagellar basal body rod protein FlgB.